Here is a 366-residue protein sequence, read N- to C-terminus: Ribosomal RNA large subunit methyltransferase M (366 aa).

S-adenosyl-L-methionine-binding positions include Ser-188, 221–224, Asp-240, Asp-260, and Asp-277; that span reads CPGG. Lys-306 acts as the Proton acceptor in catalysis.

Belongs to the class I-like SAM-binding methyltransferase superfamily. RNA methyltransferase RlmE family. RlmM subfamily. As to quaternary structure, monomer.

It localises to the cytoplasm. The catalysed reaction is cytidine(2498) in 23S rRNA + S-adenosyl-L-methionine = 2'-O-methylcytidine(2498) in 23S rRNA + S-adenosyl-L-homocysteine + H(+). Its function is as follows. Catalyzes the 2'-O-methylation at nucleotide C2498 in 23S rRNA. This chain is Ribosomal RNA large subunit methyltransferase M, found in Salmonella heidelberg (strain SL476).